A 94-amino-acid chain; its full sequence is Integration host factor subunit beta (94 aa).

This sequence belongs to the bacterial histone-like protein family. Heterodimer of an alpha and a beta chain.

Its function is as follows. This protein is one of the two subunits of integration host factor, a specific DNA-binding protein that functions in genetic recombination as well as in transcriptional and translational control. The sequence is that of Integration host factor subunit beta from Ruegeria pomeroyi (strain ATCC 700808 / DSM 15171 / DSS-3) (Silicibacter pomeroyi).